A 418-amino-acid chain; its full sequence is Histidine--tRNA ligase (418 aa).

Belongs to the class-II aminoacyl-tRNA synthetase family.

It is found in the cytoplasm. It carries out the reaction tRNA(His) + L-histidine + ATP = L-histidyl-tRNA(His) + AMP + diphosphate + H(+). The chain is Histidine--tRNA ligase from Methanococcus vannielii (strain ATCC 35089 / DSM 1224 / JCM 13029 / OCM 148 / SB).